Here is a 455-residue protein sequence, read N- to C-terminus: Gamma-aminobutyric acid receptor subunit alpha-1 (455 aa).

An N-terminal signal peptide occupies residues 1-27 (MKKSRGLSDYLWAWTLILSTLSGRSYG). Residues 28–252 (QPSQDELKDN…FHLKRKIGYF (225 aa)) lie on the Extracellular side of the membrane. Asn-37 carries N-linked (GlcNAc...) asparagine glycosylation. Arg-93 lines the 4-aminobutanoate pocket. Asn-137 carries an N-linked (GlcNAc...) asparagine glycan. Residue Thr-156 coordinates 4-aminobutanoate. An intrachain disulfide couples Cys-165 to Cys-179. A helical transmembrane segment spans residues 253–273 (VIQTYLPCIMTVILSQVSFWL). The Cytoplasmic portion of the chain corresponds to 274 to 278 (NRESV). A helical membrane pass occupies residues 279–300 (PARTVFGVTTVLTMTTLSISAR). At 301–310 (NSLPKVAYAT) the chain is on the extracellular side. Residues 311 to 332 (AMDWFIAVCYAFVFSALIEFAT) form a helical membrane-spanning segment. At 333–420 (VNYFTKRGYA…TFNSVSKIDR (88 aa)) the chain is on the cytoplasmic side. Residues 421-440 (LSRIAFPLLFGIFNLVYWAT) form a helical membrane-spanning segment. Over 441–455 (YLNREPQLKAPTPHQ) the chain is Extracellular.

The protein belongs to the ligand-gated ion channel (TC 1.A.9) family. Gamma-aminobutyric acid receptor (TC 1.A.9.5) subfamily. GABRA1 sub-subfamily. As to quaternary structure, heteropentamer, formed by a combination of alpha (GABRA1-6), beta (GABRB1-3), gamma (GABRG1-3), delta (GABRD), epsilon (GABRE), rho (GABRR1-3), pi (GABRP) and theta (GABRQ) subunits, each subunit exhibiting distinct physiological and pharmacological properties. Interacts with UBQLN1. Interacts with TRAK1. Interacts with KIF21B. Identified in a complex of 720 kDa composed of LHFPL4, NLGN2, GABRA1, GABRB2, GABRG2 and GABRB3. Interacts with LHFPL4. Interacts with NLGN2. Interacts with SHISA7; interaction leads to the regulation of GABA(A) receptor trafficking, channel deactivation kinetics and pharmacology. Post-translationally, glycosylated. As to expression, expressed in the cerebellum.

Its subcellular location is the postsynaptic cell membrane. It localises to the cell membrane. The protein resides in the cytoplasmic vesicle membrane. The enzyme catalyses chloride(in) = chloride(out). Its activity is regulated as follows. Allosterically activated by benzodiazepines, the neuroanesthetic alphaxalone and pentobarbital. Inhibited by the antagonist bicuculline. Potentiated by histamine. Its function is as follows. Alpha subunit of the heteropentameric ligand-gated chloride channel gated by Gamma-aminobutyric acid (GABA), a major inhibitory neurotransmitter in the brain. GABA-gated chloride channels, also named GABA(A) receptors (GABAAR), consist of five subunits arranged around a central pore and contain GABA active binding site(s) located at the alpha and beta subunit interface(s). When activated by GABA, GABAARs selectively allow the flow of chloride anions across the cell membrane down their electrochemical gradient. Alpha-1/GABRA1-containing GABAARs are largely synaptic. Chloride influx into the postsynaptic neuron following GABAAR opening decreases the neuron ability to generate a new action potential, thereby reducing nerve transmission. GABAARs containing alpha-1 and beta-2 or -3 subunits exhibit synaptogenic activity; the gamma-2 subunit being necessary but not sufficient to induce rapid synaptic contacts formation. GABAARs function also as histamine receptor where histamine binds at the interface of two neighboring beta subunits and potentiates GABA response. GABAARs containing alpha, beta and epsilon subunits also permit spontaneous chloride channel activity while preserving the structural information required for GABA-gated openings. Alpha-1-mediated plasticity in the orbitofrontal cortex regulates context-dependent action selection. Together with rho subunits, may also control neuronal and glial GABAergic transmission in the cerebellum. This Mus musculus (Mouse) protein is Gamma-aminobutyric acid receptor subunit alpha-1.